A 260-amino-acid chain; its full sequence is Ditrans,polycis-undecaprenyl-diphosphate synthase ((2E,6E)-farnesyl-diphosphate specific) (260 aa).

Residue aspartate 20 is part of the active site. Mg(2+) is bound at residue aspartate 20. Substrate-binding positions include 21 to 24 (GNGR), tryptophan 25, arginine 33, histidine 37, and 65 to 67 (SSE). The active-site Proton acceptor is asparagine 68. The substrate site is built by tryptophan 69, arginine 71, and arginine 188. Histidine 193 provides a ligand contact to Mg(2+). Residue 194 to 196 (RIS) participates in substrate binding. Glutamate 207 lines the Mg(2+) pocket.

Belongs to the UPP synthase family. As to quaternary structure, homodimer. The cofactor is Mg(2+).

It carries out the reaction 8 isopentenyl diphosphate + (2E,6E)-farnesyl diphosphate = di-trans,octa-cis-undecaprenyl diphosphate + 8 diphosphate. In terms of biological role, catalyzes the sequential condensation of isopentenyl diphosphate (IPP) with (2E,6E)-farnesyl diphosphate (E,E-FPP) to yield (2Z,6Z,10Z,14Z,18Z,22Z,26Z,30Z,34E,38E)-undecaprenyl diphosphate (di-trans,octa-cis-UPP). UPP is the precursor of glycosyl carrier lipid in the biosynthesis of bacterial cell wall polysaccharide components such as peptidoglycan and lipopolysaccharide. The polypeptide is Ditrans,polycis-undecaprenyl-diphosphate synthase ((2E,6E)-farnesyl-diphosphate specific) (Wigglesworthia glossinidia brevipalpis).